A 436-amino-acid polypeptide reads, in one-letter code: Trigger factor (436 aa).

Residues 161 to 246 (GDQLNIDFVG…VNSVSAPQLP (86 aa)) enclose the PPIase FKBP-type domain.

This sequence belongs to the FKBP-type PPIase family. Tig subfamily.

It localises to the cytoplasm. It catalyses the reaction [protein]-peptidylproline (omega=180) = [protein]-peptidylproline (omega=0). Its function is as follows. Involved in protein export. Acts as a chaperone by maintaining the newly synthesized protein in an open conformation. Functions as a peptidyl-prolyl cis-trans isomerase. The chain is Trigger factor from Ectopseudomonas mendocina (strain ymp) (Pseudomonas mendocina).